A 759-amino-acid polypeptide reads, in one-letter code: MIFRTIRIRDADDARLKAISKRLGLALSLDEMKAVRSYFERLGRDPIDAEIHAVAQSWSEHCSYKSSKYYLKKYLGSLKTDYTILAMEDDAGVVDFDGEYAYVLKMESHNHPSAVEPYGGAATGIGGIVRDVLCMGAQPVALIDSLFLGDVSSDRYEGLLSPRYIFGGVVGGIRDYGNRIGIPNVAGSLYFDKLYNSNPLVNAGCVGIVRRDRIVRSKSYKPGDVLVLMGGKTGRDGIHGVNFASTTLGKVTKSSRLAIQLGNPIVEQPMIKAVLEANDAGLIRAMKDLGGGGLSSAATEMVYAGGFGAEITLDDIKLKESNMSGWEIWISESQERMLMECYPEDVEKIRQIAEKWNLDFSVIGQVTADRRIRVYYKKRKIIDMDIEFLDDSPVYQRPYRIKEVEKSVTVPQEPEDLNSFVRDFMARLNTCARFNVVRQYDHTVRGSTIVTPFVGRPNKETHADATVIKPLENSMRGLVLTSGSRPNMVSVDPYAGTLLTLAEAYKNILSTGGRPHSVVDALNFGNPEREEIMGQFVESVRAIGDFCRKMGLPVVAGNVSFYNEYRKTDIMPTPTIMMVGLIDDVRRSRTTYMKGSGNAIYLIGEPCDNLTGSEYSRMHGYTDGFLPAPDLDELTRIRDFLSSKADMILSSHDVSSGGLFAALSEMSFGSGIGFHVDISNVSAARPTVKLFSECGNGLVLEIAKDKEEQFVDGSNGLAIKRLGETGGDRIIVDEAGLNIIDVAVDDLRGAWEHGLDRYI.

Histidine 61 is a catalytic residue. ATP is bound by residues tyrosine 64 and lysine 105. Glutamate 107 is a binding site for Mg(2+). Substrate is bound by residues 108–111 (SHNH) and arginine 130. Catalysis depends on histidine 109, which acts as the Proton acceptor. Aspartate 131 contributes to the Mg(2+) binding site. Position 260 (glutamine 260) interacts with substrate. Residue aspartate 288 coordinates Mg(2+). A substrate-binding site is contributed by 332–334 (ESQ). 2 residues coordinate ATP: aspartate 520 and glycine 557. Asparagine 558 serves as a coordination point for Mg(2+). Serine 560 is a binding site for substrate.

The protein belongs to the FGAMS family. In terms of assembly, monomer. Part of the FGAM synthase complex composed of 1 PurL, 1 PurQ and 2 PurS subunits.

It localises to the cytoplasm. It carries out the reaction N(2)-formyl-N(1)-(5-phospho-beta-D-ribosyl)glycinamide + L-glutamine + ATP + H2O = 2-formamido-N(1)-(5-O-phospho-beta-D-ribosyl)acetamidine + L-glutamate + ADP + phosphate + H(+). It participates in purine metabolism; IMP biosynthesis via de novo pathway; 5-amino-1-(5-phospho-D-ribosyl)imidazole from N(2)-formyl-N(1)-(5-phospho-D-ribosyl)glycinamide: step 1/2. Its function is as follows. Part of the phosphoribosylformylglycinamidine synthase complex involved in the purines biosynthetic pathway. Catalyzes the ATP-dependent conversion of formylglycinamide ribonucleotide (FGAR) and glutamine to yield formylglycinamidine ribonucleotide (FGAM) and glutamate. The FGAM synthase complex is composed of three subunits. PurQ produces an ammonia molecule by converting glutamine to glutamate. PurL transfers the ammonia molecule to FGAR to form FGAM in an ATP-dependent manner. PurS interacts with PurQ and PurL and is thought to assist in the transfer of the ammonia molecule from PurQ to PurL. In Thermoplasma acidophilum (strain ATCC 25905 / DSM 1728 / JCM 9062 / NBRC 15155 / AMRC-C165), this protein is Phosphoribosylformylglycinamidine synthase subunit PurL.